Here is a 494-residue protein sequence, read N- to C-terminus: Aspartyl/glutamyl-tRNA(Asn/Gln) amidotransferase subunit B (494 aa).

This sequence belongs to the GatB/GatE family. GatB subfamily. In terms of assembly, heterotrimer of A, B and C subunits.

It catalyses the reaction L-glutamyl-tRNA(Gln) + L-glutamine + ATP + H2O = L-glutaminyl-tRNA(Gln) + L-glutamate + ADP + phosphate + H(+). The catalysed reaction is L-aspartyl-tRNA(Asn) + L-glutamine + ATP + H2O = L-asparaginyl-tRNA(Asn) + L-glutamate + ADP + phosphate + 2 H(+). Its function is as follows. Allows the formation of correctly charged Asn-tRNA(Asn) or Gln-tRNA(Gln) through the transamidation of misacylated Asp-tRNA(Asn) or Glu-tRNA(Gln) in organisms which lack either or both of asparaginyl-tRNA or glutaminyl-tRNA synthetases. The reaction takes place in the presence of glutamine and ATP through an activated phospho-Asp-tRNA(Asn) or phospho-Glu-tRNA(Gln). The polypeptide is Aspartyl/glutamyl-tRNA(Asn/Gln) amidotransferase subunit B (Protochlamydia amoebophila (strain UWE25)).